We begin with the raw amino-acid sequence, 450 residues long: NADH-quinone oxidoreductase subunit H (450 aa).

A run of 9 helical transmembrane segments spans residues 18–38 (WWLV…TPLL), 91–111 (ILAP…IPFG), 128–148 (LPVA…GIVL), 169–189 (VISY…DAGT), 201–221 (HTWY…SMVG), 262–282 (VTVS…PFPL), 292–312 (WWPV…FVWL), 324–344 (FMGL…MIVA), and 358–378 (SIAL…LLWK). Residues 387 to 450 (APEKPVEPRG…TGPTQENSDD (64 aa)) are disordered. Residues 390–400 (KPVEPRGRAEL) are compositionally biased toward basic and acidic residues. Positions 433-450 (VSVTGAHSTGPTQENSDD) are enriched in polar residues.

Belongs to the complex I subunit 1 family. NDH-1 is composed of 14 different subunits. Subunits NuoA, H, J, K, L, M, N constitute the membrane sector of the complex.

It is found in the cell membrane. It carries out the reaction a quinone + NADH + 5 H(+)(in) = a quinol + NAD(+) + 4 H(+)(out). In terms of biological role, NDH-1 shuttles electrons from NADH, via FMN and iron-sulfur (Fe-S) centers, to quinones in the respiratory chain. The immediate electron acceptor for the enzyme in this species is believed to be ubiquinone. Couples the redox reaction to proton translocation (for every two electrons transferred, four hydrogen ions are translocated across the cytoplasmic membrane), and thus conserves the redox energy in a proton gradient. This subunit may bind ubiquinone. The protein is NADH-quinone oxidoreductase subunit H of Rhodococcus jostii (strain RHA1).